Reading from the N-terminus, the 44-residue chain is MQAKAPMYPNEPFLVFWNAPTTQCRLRYKVDLDLNTFHIVTNAR.

Belongs to the glycosyl hydrolase 56 family. Monomer. In terms of processing, contains disulfide bonds. Post-translationally, glycosylated. In terms of tissue distribution, expressed by the venom gland.

It is found in the secreted. It catalyses the reaction Random hydrolysis of (1-&gt;4)-linkages between N-acetyl-beta-D-glucosamine and D-glucuronate residues in hyaluronate.. Snake venom endo-hyaluronidase that degrades hyaluronan to smaller oligosaccharide fragments. In venom, it is not toxic by itself, but increases the diffusion of other venom proteins such as crotoxin (a neurotoxic and myotoxic PLA2) by degrading the extracellular matrix. In addition, it displays antiedematogenic activity, since it significantly diminishes the oedematogenic activity of crotoxin (probably by direct substrate hydrolysis, since hyaluronan possesses strong water-binding capacity). The sequence is that of Hyaluronidase CdtHya1 from Crotalus durissus terrificus (South American rattlesnake).